Here is a 325-residue protein sequence, read N- to C-terminus: Elongation factor P--(R)-beta-lysine ligase (325 aa).

Position 76–78 (76–78 (SPE)) interacts with substrate. Residues 100 to 102 (RNE) and Asn-109 each bind ATP. Tyr-118 lines the substrate pocket. An ATP-binding site is contributed by 244 to 245 (EL). Glu-251 lines the substrate pocket. Residue Gly-300 coordinates ATP.

This sequence belongs to the class-II aminoacyl-tRNA synthetase family. EpmA subfamily. In terms of assembly, homodimer.

The enzyme catalyses D-beta-lysine + L-lysyl-[protein] + ATP = N(6)-((3R)-3,6-diaminohexanoyl)-L-lysyl-[protein] + AMP + diphosphate + H(+). Its function is as follows. With EpmB is involved in the beta-lysylation step of the post-translational modification of translation elongation factor P (EF-P). Catalyzes the ATP-dependent activation of (R)-beta-lysine produced by EpmB, forming a lysyl-adenylate, from which the beta-lysyl moiety is then transferred to the epsilon-amino group of a conserved specific lysine residue in EF-P. The sequence is that of Elongation factor P--(R)-beta-lysine ligase from Klebsiella pneumoniae subsp. pneumoniae (strain ATCC 700721 / MGH 78578).